Reading from the N-terminus, the 290-residue chain is MSFRIATRKSKLALVQTDYVIDLLALKFKMQCEKVLIRTEGDRKLDVSLDKIGGKGVFVKDIEKALIEKRAQAAVHSMKDMPNELLDLFEIIAMPVREDVRDVFISPEGIKFLDLPKGAVIGTSSIRRAVQIKNLRHDIEIVPIRGNIETRVRKMKEEKLDGIVLAAAGVKRLGMSEIITEYFNPFEFIPAVGQGAIGVEILKNSEYASTLGKIDNEDIRMGVEAERSFLKKLQGDCHTPVGAYSVIEGEILNITGIFQVGNKLIKKDVCGDKWDYIALGESLGEKIISG.

S-(dipyrrolylmethanemethyl)cysteine is present on Cys237.

The protein belongs to the HMBS family. As to quaternary structure, monomer. Dipyrromethane is required as a cofactor.

The enzyme catalyses 4 porphobilinogen + H2O = hydroxymethylbilane + 4 NH4(+). The protein operates within porphyrin-containing compound metabolism; protoporphyrin-IX biosynthesis; coproporphyrinogen-III from 5-aminolevulinate: step 2/4. Tetrapolymerization of the monopyrrole PBG into the hydroxymethylbilane pre-uroporphyrinogen in several discrete steps. The polypeptide is Porphobilinogen deaminase (Clostridium kluyveri (strain NBRC 12016)).